Reading from the N-terminus, the 649-residue chain is Replication protein E1 (649 aa).

The short motif at 83–85 is the Nuclear localization signal element; it reads KRK. Phosphoserine; by host occurs at positions 89, 93, and 107. A Nuclear export signal motif is present at residues 106–115; it reads ISPRLDAIKL. The tract at residues 138 to 169 is disordered; the sequence is GYSEVEAGTGTQVEKHGVPENGGDGQEKDTGR. The tract at residues 187–353 is DNA-binding region; it reads REHAGTAGIL…QTVIEHGLAD (167 aa). The region spanning 452 to 602 is the SF3 helicase domain; that stretch reads IEFIPFLTKF…FPFDRNGNAV (151 aa). Position 478–485 (478–485) interacts with ATP; it reads GPPDTGKS. Lys559 is covalently cross-linked (Glycyl lysine isopeptide (Lys-Gly) (interchain with G-Cter in SUMO)).

It belongs to the papillomaviridae E1 protein family. Can form hexamers. Interacts with E2 protein; this interaction increases E1 DNA binding specificity. Interacts with host DNA polymerase subunit POLA2. Interacts with host single stranded DNA-binding protein RPA1. Interacts with host TOP1; this interaction stimulates the enzymatic activity of TOP1. Post-translationally, phosphorylated. Sumoylated.

It is found in the host nucleus. It carries out the reaction Couples ATP hydrolysis with the unwinding of duplex DNA by translocating in the 3'-5' direction.. It catalyses the reaction ATP + H2O = ADP + phosphate + H(+). Its function is as follows. ATP-dependent DNA 3'-5' helicase required for initiation of viral DNA replication. It forms a complex with the viral E2 protein. The E1-E2 complex binds to the replication origin which contains binding sites for both proteins. During the initial step, a dimer of E1 interacts with a dimer of protein E2 leading to a complex that binds the viral origin of replication with high specificity. Then, a second dimer of E1 displaces the E2 dimer in an ATP-dependent manner to form the E1 tetramer. Following this, two E1 monomers are added to each half of the site, which results in the formation of two E1 trimers on the viral ori. Subsequently, two hexamers will be created. The double hexamer acts as a bi-directional helicase machinery and unwinds the viral DNA and then recruits the host DNA polymerase to start replication. The protein is Replication protein E1 of Homo sapiens (Human).